The following is a 297-amino-acid chain: Oxidoreductase aprR (297 aa).

The protein belongs to the NmrA-type oxidoreductase family. Isoflavone reductase subfamily.

It participates in secondary metabolite biosynthesis. Oxidoreductase; part of the gene cluster that mediates the biosynthesis of the asperipin-2a, a bicyclic peptide that possesses two macrocyclic ether rings consisting of 14- and 17-membered paracyclophans. The pathway starts with the processing of the precursor aprA by kexin proteases to produce 11 identical copies of the hexapeptide Phe-Tyr-Tyr-Thr-Gly-Tyr. Macrocyclization of asperipin-2a may accompany an alpha-hydroxylation-dehydration sequence to give an imine, which is readily hydrolyzed to yield putative ketone intermediate. The reductase aprR may be required for the final reduction to yield asperipin-2a. The chain is Oxidoreductase aprR from Aspergillus flavus (strain ATCC 200026 / FGSC A1120 / IAM 13836 / NRRL 3357 / JCM 12722 / SRRC 167).